A 363-amino-acid chain; its full sequence is FMNH(2)-dependent dimethylsulfone monooxygenase (363 aa).

This sequence belongs to the SsuD family.

The catalysed reaction is dimethyl sulfone + FMNH2 + O2 = methanesulfinate + FMN + formaldehyde + H2O + 2 H(+). In terms of biological role, involved in the dimethyl sulfide degradation pathway. Catalyzes the oxidation of dimethylsulfone (DMSO2) to yield methanesulfinate, which is oxidized spontaneously to methanesulfonate in the presence of dioxygen and FMNH(2). The sequence is that of FMNH(2)-dependent dimethylsulfone monooxygenase from Pseudomonas putida (Arthrobacter siderocapsulatus).